The sequence spans 119 residues: Chorion class CA protein ERA.1 (119 aa).

The first 21 residues, 1–21 (MSTFAVLLLCVQACLIQNVYS), serve as a signal peptide directing secretion. A left arm region spans residues 22-55 (QCLGRVGPGGPPLGPYGGPLGGPGYGPVGYGGCG). The tract at residues 56 to 103 (GYGGSGIGNVAVAGELPVAGSTGVMGQVPVIGAVEFAGPACAVGSVSI) is central domain. The segment at 104 to 119 (SGACGPTCGCGGSPYY) is right arm.

Belongs to the chorion protein family.

Functionally, this protein is one of many from the eggshell of the silk moth. This chain is Chorion class CA protein ERA.1 (ERA.1), found in Bombyx mori (Silk moth).